Here is a 252-residue protein sequence, read N- to C-terminus: tRNA1(Val) (adenine(37)-N6)-methyltransferase (252 aa).

This sequence belongs to the methyltransferase superfamily. tRNA (adenine-N(6)-)-methyltransferase family.

Its subcellular location is the cytoplasm. The catalysed reaction is adenosine(37) in tRNA1(Val) + S-adenosyl-L-methionine = N(6)-methyladenosine(37) in tRNA1(Val) + S-adenosyl-L-homocysteine + H(+). In terms of biological role, specifically methylates the adenine in position 37 of tRNA(1)(Val) (anticodon cmo5UAC). The chain is tRNA1(Val) (adenine(37)-N6)-methyltransferase from Yersinia pseudotuberculosis serotype O:3 (strain YPIII).